The following is a 457-amino-acid chain: G-protein coupled receptor 135 (457 aa).

A disordered region spans residues 1–27 (MEEQARPPSRPAASATLPGSAHPGGAA). Residues 1–64 (MEEQARPPSR…EAAGSRGPAP (64 aa)) are Extracellular-facing. Asn-47 is a glycosylation site (N-linked (GlcNAc...) asparagine). A helical transmembrane segment spans residues 65-85 (LLWHGAAVAAQALVLLLIFLL). Residues 86 to 109 (SSLGNCAVMGVIVKHRQLRTVTNA) lie on the Cytoplasmic side of the membrane. Residues 110–130 (FILSLSLSDLLTALLCLPAAF) traverse the membrane as a helical segment. At 131 to 156 (LDLFAPPGDSGPWRSFCAASRFFSSC) the chain is on the extracellular side. A helical membrane pass occupies residues 157–177 (FGIVSTFSVALISLDRYCAIV). The Cytoplasmic portion of the chain corresponds to 178–189 (RPPRDKLGRRRA). Residues 190–210 (LQLLAGAWLAALGFSLPWELL) form a helical membrane-spanning segment. At 211–235 (RAPREPPTPQSFHRCLYRTSPDPAQ) the chain is on the extracellular side. The helical transmembrane segment at 236 to 256 (LGAAYSVGLVVACYLLPFLLM) threads the bilayer. Topologically, residues 257–295 (CFCRYHICKTVRLSDVRVRPMTTYARVLRFFSEVRTATT) are cytoplasmic. The helical transmembrane segment at 296–316 (VLIMIVFVICCWGPYCFLVLL) threads the bilayer. Topologically, residues 317–329 (AATRQGQTTQAPS) are extracellular. Residues 330–350 (LLNVAAVWLTWANGAINPVIY) form a helical membrane-spanning segment. Topologically, residues 351–457 (AIRNPNISMF…HKSETRDSSI (107 aa)) are cytoplasmic.

It belongs to the G-protein coupled receptor 1 family. Interacts with MTNR1B. Interacts with ARRB1 and ARRB2 in a spontaneous and agonist-independent manner; leading to the internalization of GPR135 in the endosomal compartment.

The protein resides in the cell membrane. It localises to the endosome membrane. In terms of biological role, orphan receptor. Has spontaneous activity for beta-arrestin recruitment. Shows a reciprocal regulatory interaction with the melatonin receptor MTNR1B most likely through receptor heteromerization. This chain is G-protein coupled receptor 135 (Gpr135), found in Rattus norvegicus (Rat).